Reading from the N-terminus, the 345-residue chain is Fructose-bisphosphate aldolase, plasmid (345 aa).

D-glyceraldehyde 3-phosphate is bound at residue S50. D83 acts as the Proton donor in catalysis. Zn(2+) contacts are provided by H84, D105, E142, and H198. G199 is a binding site for dihydroxyacetone phosphate. Position 232 (H232) interacts with Zn(2+). Dihydroxyacetone phosphate contacts are provided by residues 233 to 235 (GSS) and 275 to 278 (NIDT).

The protein belongs to the class II fructose-bisphosphate aldolase family. As to quaternary structure, homodimer. The cofactor is Zn(2+).

It catalyses the reaction beta-D-fructose 1,6-bisphosphate = D-glyceraldehyde 3-phosphate + dihydroxyacetone phosphate. It functions in the pathway carbohydrate biosynthesis; Calvin cycle. The protein operates within carbohydrate degradation; glycolysis; D-glyceraldehyde 3-phosphate and glycerone phosphate from D-glucose: step 4/4. Its function is as follows. Catalyzes the aldol condensation of dihydroxyacetone phosphate (DHAP or glycerone-phosphate) with glyceraldehyde 3-phosphate (G3P) to form fructose 1,6-bisphosphate (FBP) in gluconeogenesis and the reverse reaction in glycolysis. The protein is Fructose-bisphosphate aldolase, plasmid (cbbAP) of Cupriavidus necator (strain ATCC 17699 / DSM 428 / KCTC 22496 / NCIMB 10442 / H16 / Stanier 337) (Ralstonia eutropha).